Here is a 1163-residue protein sequence, read N- to C-terminus: Spike glycoprotein (1163 aa).

An N-terminal signal peptide occupies residues 1–18; it reads MLERSLLLATLLSALCSA. Over 19–1096 the chain is Extracellular; sequence NLFGNNSYVY…LKTYIKWPWY (1078 aa). Residues Asn-23, Asn-51, Asn-74, Asn-102, Asn-139, Asn-145, Asn-164, Asn-179, Asn-213, Asn-238, Asn-248, Asn-265, Asn-272, Asn-277, Asn-307, Asn-426, Asn-448, Asn-514, Asn-531, Asn-543, Asn-580, Asn-592, Asn-670, and Asn-677 are each glycosylated (N-linked (GlcNAc...) asparagine; by host). The segment at 770 to 875 is heptad repeat 1 (HR1); sequence IPFATQLQAR…QVDRIITGRL (106 aa). Positions 823-867 form a coiled coil; it reads QDVVNKQSSILTETMASLNKNFGAISSVLQDIYQQLDSIQADAQV. Residues Asn-948, Asn-961, Asn-980, Asn-1015, Asn-1039, Asn-1052, and Asn-1075 are each glycosylated (N-linked (GlcNAc...) asparagine; by host). Positions 1025-1106 are heptad repeat 2 (HR2); that stretch reads NDDFDFDDEL…VWLAIAFLTI (82 aa). The stretch at 1056-1084 forms a coiled coil; sequence PILDIGSEIDRIQGVIQGLNDSLIDLETL. Residues 1097-1117 form a helical membrane-spanning segment; the sequence is VWLAIAFLTIIFILVLCWIFF. Residues 1118–1163 are Cytoplasmic-facing; the sequence is MTGCCGCCCGCFGIIPLMSKCGKKSSYYTTFDNDVVYEQYRPKKSV. A Di-lysine motif motif is present at residues 1160 to 1163; sequence KKSV.

The protein belongs to the gammacoronaviruses spike protein family. Homotrimer; each monomer consists of a S1 and a S2 subunit. The resulting peplomers protrude from the virus surface as spikes. In terms of processing, specific enzymatic cleavages in vivo yield mature proteins. The precursor is processed into S1 and S2 by host cell furin or furin-like protease to yield the mature S1 and S2 proteins. The cleavage site between S1 and S2 requires the optimal sequence [KR]-X-[KR]-R. Additionally, a second cleavage leads to the release of a fusion peptide after viral attachment to host cell receptor.

The protein localises to the virion membrane. It localises to the host endoplasmic reticulum-Golgi intermediate compartment membrane. Attaches the virion to the host cell membrane by interacting with sialic acids, initiating the infection. In terms of biological role, mediates fusion of the virion and cellular membranes by acting as a class I viral fusion protein. Under the current model, the protein has at least 3 conformational states: pre-fusion native state, pre-hairpin intermediate state, and post-fusion hairpin state. During viral and target cell membrane fusion, the coiled coil regions (heptad repeats) assume a trimer-of-hairpins structure, positioning the fusion peptide in close proximity to the C-terminal region of the ectodomain. The formation of this structure appears to drive apposition and subsequent fusion of viral and target cell membranes. Its function is as follows. Acts as a viral fusion peptide after S2 cleavage occurring upon virus endocytosis. This Gallus gallus (Chicken) protein is Spike glycoprotein.